Consider the following 45-residue polypeptide: Thymosin beta (45 aa).

The interval 1–45 (MADKPNMTEITSFDKTKLRKTETQEKNPLPTKETIEQERQGESTP) is disordered. Basic and acidic residues-rich tracts occupy residues 12–25 (SFDK…ETQE) and 33–45 (ETIE…ESTP).

Belongs to the thymosin beta family.

It is found in the cytoplasm. The protein resides in the cytoskeleton. Plays an important role in the organization of the cytoskeleton. Binds to and sequesters actin monomers (G actin) and therefore inhibits actin polymerization. This chain is Thymosin beta (tmsb), found in Danio rerio (Zebrafish).